We begin with the raw amino-acid sequence, 709 residues long: D-(-)-3-hydroxybutyrate oligomer hydrolase (709 aa).

Residues 1 to 26 form the signal peptide; the sequence is MTVFKTAPLLIAALAASSCGGGGSGA. The disordered stretch occupies residues 58–77; sequence GLGRSGLQDDSPPGYAGSQP. Ser-305 serves as the catalytic Charge relay system.

Belongs to the D-(-)-3-hydroxybutyrate oligomer hydrolase family.

The protein localises to the secreted. The enzyme catalyses (3R)-hydroxybutanoate dimer + H2O = 2 (R)-3-hydroxybutanoate + H(+). The protein operates within lipid metabolism; butanoate metabolism. Participates in the degradation of poly-3-hydroxybutyrate (PHB). It works downstream of poly(3-hydroxybutyrate) depolymerase, hydrolyzing D(-)-3-hydroxybutyrate oligomers of various length (3HB-oligomers) into 3HB-monomers. This Paracidovorax citrulli (strain AAC00-1) (Acidovorax citrulli) protein is D-(-)-3-hydroxybutyrate oligomer hydrolase.